The chain runs to 441 residues: Peroxisomal multifunctional enzyme A (441 aa).

The interval 1–302 is 3-hydroxyacyl-CoA dehydrogenase; it reads MALNFKDKVV…VNSKPADGES (302 aa). Residues 11 to 35, Ile-19, Asp-38, 73 to 74, and Asn-97 contribute to the NAD(+) site; these read IVTG…AKVV and SV. Ser-149 lines the substrate pocket. Tyr-162 (proton acceptor) is an active-site residue. NAD(+) contacts are provided by residues 162 to 166 and 194 to 197; these read YGSMK and AASR. Residues 331 to 440 enclose the SCP2 domain; sequence ASKIFTTIQG…KLGALMQGSK (110 aa). Position 412 (Gln-412) interacts with substrate.

Belongs to the short-chain dehydrogenases/reductases (SDR) family.

The protein localises to the peroxisome. It catalyses the reaction a (3S)-3-hydroxyacyl-CoA + NAD(+) = a 3-oxoacyl-CoA + NADH + H(+). It functions in the pathway lipid metabolism; fatty acid beta-oxidation. Functionally, enzyme acting on the peroxisomal beta-oxidation pathway for fatty acids. Protects the cells from the increase of the harmful xenobiotic fatty acids incorporated from their diets and optimizes cellular lipid composition for proper development. This chain is Peroxisomal multifunctional enzyme A (mfeA), found in Dictyostelium discoideum (Social amoeba).